The following is a 331-amino-acid chain: tRNA-dihydrouridine(20/20a) synthase (331 aa).

FMN contacts are provided by residues 18 to 20 and glutamine 70; that span reads PML. Cysteine 100 functions as the Proton donor in the catalytic mechanism. Residues lysine 139, histidine 172, 212–214, and 234–235 contribute to the FMN site; these read NGG and GR.

The protein belongs to the Dus family. DusA subfamily. It depends on FMN as a cofactor.

It carries out the reaction 5,6-dihydrouridine(20) in tRNA + NADP(+) = uridine(20) in tRNA + NADPH + H(+). The enzyme catalyses 5,6-dihydrouridine(20) in tRNA + NAD(+) = uridine(20) in tRNA + NADH + H(+). It catalyses the reaction 5,6-dihydrouridine(20a) in tRNA + NADP(+) = uridine(20a) in tRNA + NADPH + H(+). The catalysed reaction is 5,6-dihydrouridine(20a) in tRNA + NAD(+) = uridine(20a) in tRNA + NADH + H(+). In terms of biological role, catalyzes the synthesis of 5,6-dihydrouridine (D), a modified base found in the D-loop of most tRNAs, via the reduction of the C5-C6 double bond in target uridines. Specifically modifies U20 and U20a in tRNAs. This is tRNA-dihydrouridine(20/20a) synthase from Escherichia coli O6:H1 (strain CFT073 / ATCC 700928 / UPEC).